We begin with the raw amino-acid sequence, 189 residues long: PTS system glucose-specific EIIA component (189 aa).

The PTS EIIA type-1 domain occupies aspartate 31 to asparagine 135. Zn(2+)-binding residues include histidine 68 and histidine 83. The Tele-phosphohistidine intermediate; for EIIA activity role is filled by histidine 83. The residue at position 83 (histidine 83) is a Phosphohistidine; by HPr.

In terms of assembly, heterodimer with glycerol kinase (glpk). Zn(2+) serves as cofactor.

The protein localises to the cytoplasm. Functionally, the phosphoenolpyruvate-dependent sugar phosphotransferase system (sugar PTS), a major carbohydrate active transport system, catalyzes the phosphorylation of incoming sugar substrates concomitantly with their translocation across the cell membrane. The enzyme II complex composed of PtsG and Crr is involved in glucose transport. The sequence is that of PTS system glucose-specific EIIA component (crr) from Borreliella burgdorferi (strain ATCC 35210 / DSM 4680 / CIP 102532 / B31) (Borrelia burgdorferi).